A 274-amino-acid chain; its full sequence is Penicillin-insensitive murein endopeptidase (274 aa).

The N-terminal stretch at 1-19 (MNKTAIALLALLASSASLA) is a signal peptide. 3 disulfides stabilise this stretch: Cys-44/Cys-265, Cys-187/Cys-235, and Cys-216/Cys-223. Positions 110, 113, 120, 147, 150, and 211 each coordinate Zn(2+). Positions 227–274 (PLPPPGDGCGAELQSWFEPPKPGTTKPEKKTPPPLPPSCQALLDEHVI) are disordered.

It belongs to the peptidase M74 family. In terms of assembly, dimer. Requires Zn(2+) as cofactor.

The protein resides in the periplasm. Functionally, murein endopeptidase that cleaves the D-alanyl-meso-2,6-diamino-pimelyl amide bond that connects peptidoglycan strands. Likely plays a role in the removal of murein from the sacculus. The chain is Penicillin-insensitive murein endopeptidase from Escherichia coli O1:K1 / APEC.